Consider the following 123-residue polypeptide: Ribosome-binding factor A (123 aa).

This sequence belongs to the RbfA family. As to quaternary structure, monomer. Binds 30S ribosomal subunits, but not 50S ribosomal subunits or 70S ribosomes.

It is found in the cytoplasm. Its function is as follows. One of several proteins that assist in the late maturation steps of the functional core of the 30S ribosomal subunit. Associates with free 30S ribosomal subunits (but not with 30S subunits that are part of 70S ribosomes or polysomes). Required for efficient processing of 16S rRNA. May interact with the 5'-terminal helix region of 16S rRNA. This is Ribosome-binding factor A from Ralstonia pickettii (strain 12J).